A 236-amino-acid chain; its full sequence is Small ribosomal subunit protein uS3 (236 aa).

The 69-residue stretch at 39–107 (VRHFLMQKLS…PTQLNIAEVR (69 aa)) folds into the KH type-2 domain.

Belongs to the universal ribosomal protein uS3 family. As to quaternary structure, part of the 30S ribosomal subunit. Forms a tight complex with proteins S10 and S14.

Its function is as follows. Binds the lower part of the 30S subunit head. Binds mRNA in the 70S ribosome, positioning it for translation. In Blochmanniella pennsylvanica (strain BPEN), this protein is Small ribosomal subunit protein uS3.